The sequence spans 636 residues: MGRLLDTIDSPADLKKVPVEQLPALCQEIRELIIQTCARNGGHLGSSLGAVEINVALHHVFASPQDKLVWDVGHQAYAHKLLTGRRDAFRTIRTEGGLAGFPERHESAHDAFGVGHASTAISAALGMIEAKRVTGEPGKVVAVVGDGAMTGGVAFEGLNQAGYLGRNLLVVLNDNEMSISPNVGALSEWFSKKFASRTYNRWRRQVKEFLESVPKGPEAIGIIRHGINATKALVTPGILFEGLGFHYVGPVDGHDVKGLVETFQKLAVFDGPVLLHAITTKGKGYHPAESDKATRGHGLSFFDVATGKPVKKSPGAKAYTDLFAEALCEEMEHDPRVVAITAAMLEGTGLIKAKQRFPDRTYDVGIAEQHAVTFAAGLACEGIRPVVAIYSTFLQRAYDQIIHDVALQKLPVTFALDRGGLVGADGKTHQGAFDLAYLRCVPGLVLMAPSDENELRHMLHTSLQHDGPAALRYPRGAGEGVPLEPARVLEIGKGRLVRNVPGKPDVCVVAAGTTLKAALAAAEALAAEGVAVTVVDPRFVKPLDEALICAEAARAKRVVTVEEGCLAGGFGTACLEAFERHGLLEAGLGVRRLGIPDEFITHAEQAKQRAWVGIDAEAIAAACRALVGDRKARGVA.

Thiamine diphosphate-binding positions include histidine 74 and 115-117 (GHA). Aspartate 146 contacts Mg(2+). Residues 147–148 (GA), asparagine 175, tyrosine 285, and glutamate 368 each bind thiamine diphosphate. Asparagine 175 contacts Mg(2+).

The protein belongs to the transketolase family. DXPS subfamily. Homodimer. It depends on Mg(2+) as a cofactor. Thiamine diphosphate serves as cofactor.

It catalyses the reaction D-glyceraldehyde 3-phosphate + pyruvate + H(+) = 1-deoxy-D-xylulose 5-phosphate + CO2. It functions in the pathway metabolic intermediate biosynthesis; 1-deoxy-D-xylulose 5-phosphate biosynthesis; 1-deoxy-D-xylulose 5-phosphate from D-glyceraldehyde 3-phosphate and pyruvate: step 1/1. Functionally, catalyzes the acyloin condensation reaction between C atoms 2 and 3 of pyruvate and glyceraldehyde 3-phosphate to yield 1-deoxy-D-xylulose-5-phosphate (DXP). This Anaeromyxobacter dehalogenans (strain 2CP-C) protein is 1-deoxy-D-xylulose-5-phosphate synthase.